The chain runs to 360 residues: MLLWLAEYLAQYHSGFLVVQYITLRGILSVLTALFIAFWVGPIMIRMLQEKQVGQAIRDDGPKSHLSKAGTPTMGGALILVAIVISTLLWGDLENRFVWITLGVLFVFGAVGWVDDWRKVVEKNPRGLPARWKYLWLSVGALGAGCALFFTAQSPVETQLIVPFFKSVAINMGWFYIVLTYFVINGTSNAVNLTDGLDGLAIMPTVLVGGALGIFAYAGGHAEFATYLQIPYVAGAGELVIISAALCGAGLGFLWFNAYPAQVFMGDVGALSLGAVLGVMAVIVRQEIVLFIMGGVFVMETVSVMLQVGSFKLTGRRIFRMAPIHHHFELKGWPEPKIIVRFWIITVILVLVGLATLKIR.

The next 10 membrane-spanning stretches (helical) occupy residues 27–47 (ILSV…MIRM), 73–93 (TMGG…WGDL), 97–117 (FVWI…VDDW), 132–152 (WKYL…FFTA), 164–184 (FFKS…YFVI), 199–219 (GLAI…AYAG), 236–256 (AGEL…FLWF), 263–283 (VFMG…MAVI), 288–308 (IVLF…MLQV), and 337–357 (KIIV…LATL).

Belongs to the glycosyltransferase 4 family. MraY subfamily. Requires Mg(2+) as cofactor.

The protein resides in the cell inner membrane. The catalysed reaction is UDP-N-acetyl-alpha-D-muramoyl-L-alanyl-gamma-D-glutamyl-meso-2,6-diaminopimeloyl-D-alanyl-D-alanine + di-trans,octa-cis-undecaprenyl phosphate = di-trans,octa-cis-undecaprenyl diphospho-N-acetyl-alpha-D-muramoyl-L-alanyl-D-glutamyl-meso-2,6-diaminopimeloyl-D-alanyl-D-alanine + UMP. Its pathway is cell wall biogenesis; peptidoglycan biosynthesis. Functionally, catalyzes the initial step of the lipid cycle reactions in the biosynthesis of the cell wall peptidoglycan: transfers peptidoglycan precursor phospho-MurNAc-pentapeptide from UDP-MurNAc-pentapeptide onto the lipid carrier undecaprenyl phosphate, yielding undecaprenyl-pyrophosphoryl-MurNAc-pentapeptide, known as lipid I. The sequence is that of Phospho-N-acetylmuramoyl-pentapeptide-transferase from Alcanivorax borkumensis (strain ATCC 700651 / DSM 11573 / NCIMB 13689 / SK2).